A 178-amino-acid chain; its full sequence is Cytochrome b6-f complex iron-sulfur subunit 2 (178 aa).

A helical membrane pass occupies residues 17–36 (LLNFFTGAIVAATASAAIYP). The 101-residue stretch at 61–161 (GHPIPASQIL…VQVKDDYIWI (101 aa)) folds into the Rieske domain. 4 residues coordinate [2Fe-2S] cluster: Cys-107, His-109, Cys-125, and His-128. Cysteines 112 and 127 form a disulfide.

Belongs to the Rieske iron-sulfur protein family. In terms of assembly, the 4 large subunits of the cytochrome b6-f complex are cytochrome b6, subunit IV (17 kDa polypeptide, PetD), cytochrome f and the Rieske protein, while the 4 small subunits are PetG, PetL, PetM and PetN. The complex functions as a dimer. Requires [2Fe-2S] cluster as cofactor.

It localises to the cellular thylakoid membrane. The enzyme catalyses 2 oxidized [plastocyanin] + a plastoquinol + 2 H(+)(in) = 2 reduced [plastocyanin] + a plastoquinone + 4 H(+)(out). Its function is as follows. Component of the cytochrome b6-f complex, which mediates electron transfer between photosystem II (PSII) and photosystem I (PSI), cyclic electron flow around PSI, and state transitions. This is Cytochrome b6-f complex iron-sulfur subunit 2 from Trichormus variabilis (strain ATCC 29413 / PCC 7937) (Anabaena variabilis).